The primary structure comprises 86 residues: Co-chaperonin GroES (86 aa).

It belongs to the GroES chaperonin family. Heptamer of 7 subunits arranged in a ring. Interacts with the chaperonin GroEL.

The protein resides in the cytoplasm. Its function is as follows. Together with the chaperonin GroEL, plays an essential role in assisting protein folding. The GroEL-GroES system forms a nano-cage that allows encapsulation of the non-native substrate proteins and provides a physical environment optimized to promote and accelerate protein folding. GroES binds to the apical surface of the GroEL ring, thereby capping the opening of the GroEL channel. This is Co-chaperonin GroES from Campylobacter curvus (strain 525.92).